The chain runs to 175 residues: uncharacterized protein (175 aa).

This is an uncharacterized protein from Bacillus subtilis (strain 168).